The primary structure comprises 1192 residues: DNA ligase 1 (1192 aa).

2 disordered regions span residues 29–257 and 280–517; these read ELNK…KEKE and EKEL…KSTQ. Over residues 42–56 the composition is skewed to basic and acidic residues; that stretch reads EAVVKEKVEKKEKKE. Positions 70–113 are enriched in acidic residues; it reads EEEEEEQEEQDGEEEQEEEEEYQQQDEEIEEDINGEEEMELDEN. Positions 141–155 are enriched in basic and acidic residues; the sequence is KTIENKETKKPEKQS. The segment covering 172–198 has biased composition (acidic residues); sequence DDEEDEEDENKTDDNDLDDMLDDDSDN. Basic and acidic residues-rich tracts occupy residues 199–257 and 280–368; these read EKDS…KEKE and EKEL…RANA. Low complexity-rich tracts occupy residues 371-382 and 410-434; these read KSSVPTSTSKNS and STTT…ISSP. The span at 435-467 shows a compositional bias: basic and acidic residues; it reads SKKEEKEVITSKKQVEATKVEVKKEKEKEKEKE. Acidic residues predominate over residues 468–511; the sequence is KEDDEEEEEEEEDDDEKLEDIDEEEYEEEEEEDEEGISENEEEE. The interval 724-733 is interaction with target DNA; that stretch reads KLRIGLAERS. Residue E842 coordinates ATP. The active-site N6-AMP-lysine intermediate is K844. Positions 849 and 865 each coordinate ATP. Mg(2+) is bound at residue E897. Residues 918–920 are interaction with target DNA; the sequence is ARK. E996 serves as a coordination point for Mg(2+). K1001, R1014, and K1020 together coordinate ATP. Positions 1157-1192 are disordered; the sequence is DKSPEDATSSDQVVDMYQNQKINSQSSKINEKDEDY. Residues 1162–1184 are compositionally biased toward polar residues; that stretch reads DATSSDQVVDMYQNQKINSQSSK.

It belongs to the ATP-dependent DNA ligase family. Requires Mg(2+) as cofactor.

The protein localises to the nucleus. The enzyme catalyses ATP + (deoxyribonucleotide)n-3'-hydroxyl + 5'-phospho-(deoxyribonucleotide)m = (deoxyribonucleotide)n+m + AMP + diphosphate.. In terms of biological role, DNA ligase that seals nicks in double-stranded DNA during DNA replication, DNA recombination and DNA repair. This Dictyostelium discoideum (Social amoeba) protein is DNA ligase 1 (lig1).